The chain runs to 196 residues: Phosphoheptose isomerase (196 aa).

Residues 36 to 196 form the SIS domain; it reads MVACLMNEGK…AVDYMLLGGD (161 aa). 51–53 contributes to the substrate binding site; it reads NGG. Residues histidine 60 and glutamate 64 each coordinate Zn(2+). Substrate contacts are provided by residues glutamate 64, 93 to 94, 119 to 121, serine 124, and glutamine 174; these read ND and STS. Positions 174 and 182 each coordinate Zn(2+).

It belongs to the SIS family. GmhA subfamily. As to quaternary structure, homotetramer. Zn(2+) is required as a cofactor.

It localises to the cytoplasm. It catalyses the reaction 2 D-sedoheptulose 7-phosphate = D-glycero-alpha-D-manno-heptose 7-phosphate + D-glycero-beta-D-manno-heptose 7-phosphate. The protein operates within carbohydrate biosynthesis; D-glycero-D-manno-heptose 7-phosphate biosynthesis; D-glycero-alpha-D-manno-heptose 7-phosphate and D-glycero-beta-D-manno-heptose 7-phosphate from sedoheptulose 7-phosphate: step 1/1. Functionally, catalyzes the isomerization of sedoheptulose 7-phosphate in D-glycero-D-manno-heptose 7-phosphate. The protein is Phosphoheptose isomerase of Laribacter hongkongensis (strain HLHK9).